The chain runs to 434 residues: CBL-interacting protein kinase 15 (434 aa).

The Protein kinase domain occupies 12-267 (YELGRLLGKG…IQKIKESTWF (256 aa)). Residues 18–26 (LGKGTFGKV) and lysine 41 contribute to the ATP site. The active-site Proton acceptor is the aspartate 135. The tract at residues 153-182 (DFGLSALSESKRQDGLLHTTCGTPAYVAPE) is activation loop. The 36-residue stretch at 298 to 333 (RKKNAHEDVKPMSVTNLNAFEIISFSKGFDLSGMFI) folds into the NAF domain. The segment at 338 to 367 (RNEARFTSDKSASTIISKLEDVAKALNLRV) is PPI.

The protein belongs to the protein kinase superfamily. CAMK Ser/Thr protein kinase family. SNF1 subfamily. Requires Mn(2+) as cofactor.

The enzyme catalyses L-seryl-[protein] + ATP = O-phospho-L-seryl-[protein] + ADP + H(+). The catalysed reaction is L-threonyl-[protein] + ATP = O-phospho-L-threonyl-[protein] + ADP + H(+). In terms of biological role, involved in salt stress tolerance. CIPK serine-threonine protein kinases interact with CBL proteins. Binding of a CBL protein to the regulatory NAF domain of CIPK protein lead to the activation of the kinase in a calcium-dependent manner. The polypeptide is CBL-interacting protein kinase 15 (CIPK15) (Oryza sativa subsp. japonica (Rice)).